Here is a 242-residue protein sequence, read N- to C-terminus: Agamous-like MADS-box protein AGL8 (242 aa).

Positions 3–57 (RGRVQLKRIENKINRQVTFSKRRSGLLKKAHEISVLCDAEVALIVFSSKGKLFEY) constitute an MADS-box domain. Residues 88–178 (SENWVLEHAK…LKKIKEREKK (91 aa)) enclose the K-box domain. Positions 89–178 (ENWVLEHAKL…LKKIKEREKK (90 aa)) form a coiled coil.

As to quaternary structure, homodimer capable of binding to CArG-box sequences. Vascular tissue of cauline leaves, floral shoot apex and valves of carpels and fruits.

The protein resides in the nucleus. Functionally, probable transcription factor that promotes early floral meristem identity in synergy with APETALA1 and CAULIFLOWER. Is required subsequently for the transition of an inflorescence meristem into a floral meristem. Seems to be partially redundant to the function of APETALA1 and CAULIFLOWER in the up-regulation of LEAFY. Is also required for normal pattern of cell division, expansion and differentiation during morphogenesis of the silique. Probably not required for fruit elongation but instead is required to prevent ectopic activity of IND. Represses SAUR10 expression in stems and inflorescence branches. This chain is Agamous-like MADS-box protein AGL8 (AGL8), found in Arabidopsis thaliana (Mouse-ear cress).